A 217-amino-acid polypeptide reads, in one-letter code: L-lactate dehydrogenase B chain (217 aa).

Residue Asn22 coordinates NAD(+). Substrate is bound by residues Asn22 and Arg53. His77 (proton acceptor) is an active-site residue. Tyr123 is modified (phosphotyrosine). Position 132 (Thr132) interacts with substrate. Lys212 is subject to N6-acetyllysine.

Belongs to the LDH/MDH superfamily. LDH family. As to quaternary structure, homotetramer. Interacts with PTEN upstream reading frame protein MP31; the interaction leads to inhibition of mitochondrial lactate dehydrogenase activity, preventing conversion of lactate to pyruvate in mitochondria.

Its subcellular location is the cytoplasm. It is found in the mitochondrion inner membrane. The enzyme catalyses (S)-lactate + NAD(+) = pyruvate + NADH + H(+). Its pathway is fermentation; pyruvate fermentation to lactate; (S)-lactate from pyruvate: step 1/1. Interconverts simultaneously and stereospecifically pyruvate and lactate with concomitant interconversion of NADH and NAD(+). The polypeptide is L-lactate dehydrogenase B chain (LDHB) (Oryctolagus cuniculus (Rabbit)).